Consider the following 447-residue polypeptide: Cobyrinate a,c-diamide synthase (447 aa).

One can recognise a GATase cobBQ-type domain in the interval 252 to 439 (KIAIAFDESF…AHQHAVGNPY (188 aa)). Cysteine 331 acts as the Nucleophile in catalysis.

Belongs to the CobB/CbiA family. The cofactor is Mg(2+).

The enzyme catalyses cob(II)yrinate + 2 L-glutamine + 2 ATP + 2 H2O = cob(II)yrinate a,c diamide + 2 L-glutamate + 2 ADP + 2 phosphate + 2 H(+). It carries out the reaction Ni-sirohydrochlorin + 2 L-glutamine + 2 ATP + 2 H2O = Ni-sirohydrochlorin a,c-diamide + 2 L-glutamate + 2 ADP + 2 phosphate + 2 H(+). Its pathway is cofactor biosynthesis; adenosylcobalamin biosynthesis; cob(II)yrinate a,c-diamide from sirohydrochlorin (anaerobic route): step 10/10. In terms of biological role, catalyzes the ATP-dependent amidation of the two carboxylate groups at positions a and c of cobyrinate, using either L-glutamine or ammonia as the nitrogen source. Involved in the biosynthesis of the unique nickel-containing tetrapyrrole coenzyme F430, the prosthetic group of methyl-coenzyme M reductase (MCR), which plays a key role in methanogenesis and anaerobic methane oxidation. Catalyzes the ATP-dependent amidation of the two carboxylate groups at positions a and c of Ni-sirohydrochlorin, using L-glutamine or ammonia as the nitrogen source. In Methanococcus vannielii (strain ATCC 35089 / DSM 1224 / JCM 13029 / OCM 148 / SB), this protein is Cobyrinate a,c-diamide synthase.